The primary structure comprises 1051 residues: Ubiquitin-activating enzyme E1 2 (1051 aa).

The segment covering 1 to 32 (MLPRKREIVAGEVEDLQKKTRAGEGEATREEG) has biased composition (basic and acidic residues). Positions 1–42 (MLPRKREIVAGEVEDLQKKTRAGEGEATREEGDAAMAGRGNE) are disordered. Tandem repeats lie at residues 56–194 (GRET…GSVF) and 453–605 (GSTL…QMVI). A 2 approximate repeats region spans residues 56-605 (GRETMKPLFG…GAKCNTQMVI (550 aa)). ATP is bound by residues Ala-472, Asp-498, Arg-509, Lys-522, and 570-571 (DN). The active-site Glycyl thioester intermediate is the Cys-626.

It belongs to the ubiquitin-activating E1 family. As to quaternary structure, monomer.

It catalyses the reaction ATP + ubiquitin + [E1 ubiquitin-activating enzyme]-L-cysteine = AMP + diphosphate + S-ubiquitinyl-[E1 ubiquitin-activating enzyme]-L-cysteine.. It participates in protein modification; protein ubiquitination. In terms of biological role, activates ubiquitin by first adenylating its C-terminal glycine residue with ATP, and thereafter linking this residue to the side chain of a cysteine residue in E1, yielding a ubiquitin-E1 thioester and free AMP. This chain is Ubiquitin-activating enzyme E1 2 (UBA2), found in Triticum aestivum (Wheat).